The primary structure comprises 451 residues: MSLEENVKEAKNAFNILQTLSVEDRDDALDKIVEELRIKKSEVLAANAEDMKAAKLLAESGKLSSSMVKRLDLSSSDKYDSMVQGVLDVKSLPDPLGRVTYARSLDDGLDLYKVSCPVGLLLVIFEARPEVIINITSLAIKSGNAVVLKGGTESAKSFAALSNVVRSALGKSKVPQAAVQLVQSREEVSQLLKLDEYIDLVIPRGSTNLVRHIKDNTKIPVLGHAAGLCSMYVHEDADMELASKLVLDGKTDYPAACNAIETLLINEAVLSSHLPKIAETLTEAKVTLKCDPASLKVLKDMPKVSALVEPSVDQDYNTEFSDLILAIKTVPSLQSAMQHINTHGSKHTDCIITSSEAAANRFMAGIDASGVYWNASTRFADGFRYGYGTEVGISTNKIHARGPMGLDGLTIYKYQLRGNGQVASSYGVGPGKRAFKHTPINIDNISQVSKK.

It belongs to the gamma-glutamyl phosphate reductase family.

The catalysed reaction is L-glutamate 5-semialdehyde + phosphate + NADP(+) = L-glutamyl 5-phosphate + NADPH + H(+). It functions in the pathway amino-acid biosynthesis; L-proline biosynthesis; L-glutamate 5-semialdehyde from L-glutamate: step 2/2. Catalyzes the NADPH dependent reduction of L-gamma-glutamyl 5-phosphate into L-glutamate 5-semialdehyde and phosphate. The product spontaneously undergoes cyclization to form 1-pyrroline-5-carboxylate. This Schizosaccharomyces pombe (strain 972 / ATCC 24843) (Fission yeast) protein is Probable gamma-glutamyl phosphate reductase (pro1).